The primary structure comprises 572 residues: MFS-type transporter pydD (572 aa).

The segment covering 1–15 has biased composition (basic and acidic residues); that stretch reads MLQEDKSSETMHDPS. Positions 1 to 46 are disordered; the sequence is MLQEDKSSETMHDPSTRGVETRNVTAVDSPLETATTSESPETERTN. N-linked (GlcNAc...) asparagine glycosylation occurs at N23. A compositionally biased stretch (low complexity) spans 29–39; sequence SPLETATTSES. The next 8 membrane-spanning stretches (helical) occupy residues 56–76, 88–108, 123–143, 156–176, 185–205, 212–232, 255–275, and 282–302; these read FWAL…EGTI, LGGG…MTAM, WPML…GGAT, GIGA…VVPL, IVMG…GLIV, WTFY…FSFL, ALFV…GSVY, and VLVP…FEGS. An N-linked (GlcNAc...) asparagine glycan is attached at N317. Helical transmembrane passes span 321 to 341, 358 to 378, 386 to 406, 419 to 439, 451 to 471, and 529 to 549; these read VGVM…LYFM, VQIL…GFLM, PIHY…SLLD, IVYS…LLAP, TWSF…AAVF, and WLVS…AREV.

It belongs to the major facilitator superfamily.

It localises to the membrane. In terms of biological role, MFS-type transporter; part of the gene cluster that mediates the biosynthesis of pyrrocidines, fungal natural products containing a macrocyclic para-cyclophane connected to a decahydrofluorene ring system that show potent antibiotic activities toward Gram-negative bacteria. The protein is MFS-type transporter pydD of Acremonium sp.